Here is a 293-residue protein sequence, read N- to C-terminus: MDDGEELPVKTMLMLHDDLILNCLARVSRSNHPTLSLVCKRFHSLLASVELYQTRTLLGRTERCFYRQYSSRKILVQILSPNSTSAGIAVVGPNIDAIGGGIKSNTLSSVMVMDSRSHTWREAPSMRVPRMFPSVCTLDGKIYVMGGCDNLDSTNWMEVFDTKTQTWEFLQIPSEEIFGGSAYESVRYEGTVYVWSEKKDVTYKLHEGRWSAADMSANGWGWPGSSYCVIENVLYSCFVHKIRWYDPKERVWTPLKGLPSLPCNGHVKLADYGEKMVILWEKYVDVDEKKMIW.

In terms of domain architecture, F-box spans 9–55; that stretch reads VKTMLMLHDDLILNCLARVSRSNHPTLSLVCKRFHSLLASVELYQTR. Kelch repeat units lie at residues 94–140, 141–187, and 226–272; these read NIDA…TLDG, KIYV…ESVR, and SYCV…LADY.

This is Putative F-box/kelch-repeat protein At4g34170 from Arabidopsis thaliana (Mouse-ear cress).